Reading from the N-terminus, the 685-residue chain is Glycine--tRNA ligase beta subunit (685 aa).

The disordered stretch occupies residues 58-77 (GLTAQSPTTREERKGPRTDA). Basic and acidic residues predominate over residues 66–77 (TREERKGPRTDA).

It belongs to the class-II aminoacyl-tRNA synthetase family. Tetramer of two alpha and two beta subunits.

The protein localises to the cytoplasm. It catalyses the reaction tRNA(Gly) + glycine + ATP = glycyl-tRNA(Gly) + AMP + diphosphate. This is Glycine--tRNA ligase beta subunit from Paracoccus denitrificans (strain Pd 1222).